The following is a 370-amino-acid chain: MKGGSMEKIKPILAIISLQFGYAGMYIITMVSFKHGMDHWVLATYRHVVATVVMAPFALMFERKIRPKMTLAIFWRLLALGILEPLMDQNLYYIGLKNTSASYTSAFTNALPAVTFILALIFRLETVNFRKVHSVAKVVGTVITVGGAMIMTLYKGPAIEIVKAAHNSFHGGSSSTPTGQHWVLGTIAIMGSISTWAAFFILQSYTLKVYPAELSLVTLICGIGTILNAIASLIMVRDPSAWKIGMDSGTLAAVYSGVVCSGIAYYIQSIVIKQRGPVFTTSFSPMCMIITAFLGALVLAEKIHLGSIIGAVFIVLGLYSVVWGKSKDEVNPLDEKIVAKSQELPITNVVKQTNGHDVSGAPTNGVVTST.

10 helical membrane passes run 11-31, 41-61, 67-87, 102-122, 142-162, 182-202, 216-236, 252-272, 278-298, and 303-323; these read PILAIISLQFGYAGMYIITMV, VLATYRHVVATVVMAPFALMF, PKMTLAIFWRLLALGILEPLM, SYTSAFTNALPAVTFILALIF, VITVGGAMIMTLYKGPAIEIV, WVLGTIAIMGSISTWAAFFIL, LVTLICGIGTILNAIASLIMV, AAVYSGVVCSGIAYYIQSIVI, VFTTSFSPMCMIITAFLGALV, and IHLGSIIGAVFIVLGLYSVVW. EamA domains lie at 23–143 and 195–322; these read AGMY…GTVI and TWAA…YSVV.

Belongs to the drug/metabolite transporter (DMT) superfamily. Plant drug/metabolite exporter (P-DME) (TC 2.A.7.4) family.

The protein localises to the membrane. The protein is WAT1-related protein At1g44800 of Arabidopsis thaliana (Mouse-ear cress).